Consider the following 64-residue polypeptide: Large ribosomal subunit protein bL35 (64 aa).

Positions M1–Q26 are enriched in basic residues. The disordered stretch occupies residues M1–K46.

The protein belongs to the bacterial ribosomal protein bL35 family.

The protein is Large ribosomal subunit protein bL35 of Mycoplasmoides gallisepticum (strain R(low / passage 15 / clone 2)) (Mycoplasma gallisepticum).